The primary structure comprises 191 residues: Protein GrpE (191 aa).

Residues 1–22 (MKDKHNQEHDHLSQEEPESCEK) are disordered.

It belongs to the GrpE family. Homodimer.

The protein localises to the cytoplasm. Its function is as follows. Participates actively in the response to hyperosmotic and heat shock by preventing the aggregation of stress-denatured proteins, in association with DnaK and GrpE. It is the nucleotide exchange factor for DnaK and may function as a thermosensor. Unfolded proteins bind initially to DnaJ; upon interaction with the DnaJ-bound protein, DnaK hydrolyzes its bound ATP, resulting in the formation of a stable complex. GrpE releases ADP from DnaK; ATP binding to DnaK triggers the release of the substrate protein, thus completing the reaction cycle. Several rounds of ATP-dependent interactions between DnaJ, DnaK and GrpE are required for fully efficient folding. The sequence is that of Protein GrpE from Helicobacter pylori (strain Shi470).